A 417-amino-acid polypeptide reads, in one-letter code: Carboxypeptidase B (417 aa).

The signal sequence occupies residues 1 to 15 (MLALLVLVTVALASA). Residues 16-110 (HHGGEHFEGE…VEAQFDSRVR (95 aa)) constitute a propeptide, activation peptide. Residues 118 to 412 (KYNKWETIEA…LAIKYVASYV (295 aa)) enclose the Peptidase M14 domain. A disulfide bridge connects residues C173 and C186. Zn(2+) contacts are provided by H176 and E179. Substrate contacts are provided by residues 176–179 (HARE), R234, and 251–252 (NR). Disulfide bonds link C245–C268 and C259–C273. H304 is a Zn(2+) binding site. Substrate is bound by residues 305–306 (SY) and Y356. E378 serves as the catalytic Proton donor/acceptor.

Belongs to the peptidase M14 family. Requires Zn(2+) as cofactor. Pancreas.

Its subcellular location is the secreted. The protein localises to the zymogen granule lumen. The enzyme catalyses Preferential release of a C-terminal lysine or arginine amino acid.. This Homo sapiens (Human) protein is Carboxypeptidase B (CPB1).